Reading from the N-terminus, the 475-residue chain is Squamosa promoter-binding-like protein 12 (475 aa).

Residues 49–73 (NHGSTNSSGGTFTSSSELANGSSKS) are disordered. The span at 51-73 (GSTNSSGGTFTSSSELANGSSKS) shows a compositional bias: low complexity. The segment at 177–254 (SSYCQVEGCK…SDHNARRRKP (78 aa)) adopts an SBP-type zinc-finger fold. Residues Cys-180, Cys-185, Cys-202, His-205, Cys-221, Cys-224, His-228, and Cys-240 each contribute to the Zn(2+) site. The short motif at 237-253 (KKSCRRRLSDHNARRRK) is the Bipartite nuclear localization signal element. The disordered stretch occupies residues 437–475 (GGGGFWQDGDDPPPLDHASQAQAFMHPGNGSSSGYGHLH). Over residues 465-475 (NGSSSGYGHLH) the composition is skewed to polar residues.

Expressed in young panicles.

It localises to the nucleus. Trans-acting factor that binds specifically to the consensus nucleotide sequence 5'-TNCGTACAA-3'. May be involved in panicle development. The protein is Squamosa promoter-binding-like protein 12 (SPL12) of Oryza sativa subsp. japonica (Rice).